The chain runs to 512 residues: Protein singed (512 aa).

This sequence belongs to the fascin family. Interacts with Rab35, with stronger binding to the Rab35-GTP form compared to the Rab35-GDP form.

It is found in the cytoplasm. The protein localises to the cytoskeleton. Acts as an actin bundling protein. May have a role in the asymmetric organization and/or movement of cytoplasmic components. It has a role in somatic cells during the formation of adult bristles and hairs, and in the female germline during oogenesis. In Drosophila melanogaster (Fruit fly), this protein is Protein singed (sn).